The following is a 786-amino-acid chain: MENLTEIESTMESLTEMESERVEQGTDKEIGSGEKRQDDVKETENENSGERVGEEAPVREHEDSPCLIVIEEGTSLASLEEVTNADDLPKIDDEKNSQFETSPHPSPSPSVALDTEEGLINPTAEDTVEENIVSSEVSSDILKDDGDAVEVDRDTAEVQEETANIPESKLSEDTGSPHHHADILMVQEKAAEEHDMIASGDHEEFPVNPDNKHSEENQSPHHHANNVMEQDQAAEEREIISPGEHKEIPANPDTKVVEENNDRIDEGEANNLNLAGDGSGAVDHDYLTKTELDKVLEVPGSETISKLEDRPSEHLSETSMNVEKELEMPAVEILPDNDKNSDVLAVGVSGDSDNVVSVLPASQTSSDRDEGMITVDAEPTEDMKLDVPDSKLVTDTTVDSTNNKDAHVEANTERQDNSSALVLNDANNESAPVKRVPGPYVASSNIKSEARGSGDLNNGVHKIVRTPPVFDGTMRAKRSFLLDDASDGNESGTEEDQSAFMKELDSFFRERNMDFKPPKFYGEGLNCLKLWRAVTRLGGYDKVTGSKLWRQVGESFRPPKTCTTVSWTFRGFYEKALLEYERHKVSEGELQIPLPLELEPMNIDNQASGSGRARRDAASRAMQGWHSQRLNGNGEVSDPAIKDKNLVLHQKREKQIGTTPGLLKRKRAAEHGAKNAIHVSKSMLDVTVVDVGPPADWVKINVQRTQDCFEVYALVPGLVREEVRVQSDPAGRLVISGEPENPMNPWGATPFKKVVSLPTRIDPHHTSAVVTLNGQLFVRVPLEQLE.

Positions 1-16 (MENLTEIESTMESLTE) are enriched in low complexity. Disordered stretches follow at residues 1-182 (MENL…HHAD), 199-251 (SGDH…IPAN), and 395-420 (DTTV…NSSA). Composition is skewed to basic and acidic residues over residues 18 to 64 (ESER…HEDS) and 87 to 97 (DLPKIDDEKNS). Positions 130 to 139 (ENIVSSEVSS) are enriched in low complexity. 5 stretches are compositionally biased toward basic and acidic residues: residues 141 to 156 (ILKD…RDTA), 169 to 182 (KLSE…HHAD), 199 to 219 (SGDH…ENQS), 234 to 248 (AEER…HKEI), and 402 to 416 (NNKD…ERQD). The region spanning 494-585 (EEDQSAFMKE…ALLEYERHKV (92 aa)) is the ARID domain. The segment at 606–638 (QASGSGRARRDAASRAMQGWHSQRLNGNGEVSD) is disordered. The sHSP domain maps to 686-786 (VTVVDVGPPA…FVRVPLEQLE (101 aa)).

This sequence belongs to the small heat shock protein (HSP20) family.

Its subcellular location is the nucleus. The sequence is that of AT-rich interactive domain-containing protein 3 (ARID3) from Arabidopsis thaliana (Mouse-ear cress).